The following is a 377-amino-acid chain: 3-dehydroquinate synthase (377 aa).

Residues 113–117 (GVIGD), 137–138 (TT), K150, and K159 contribute to the NAD(+) site. Residues E192, H254, and H273 each contribute to the Zn(2+) site.

Belongs to the sugar phosphate cyclases superfamily. Dehydroquinate synthase family. Requires Co(2+) as cofactor. It depends on Zn(2+) as a cofactor. NAD(+) is required as a cofactor.

Its subcellular location is the cytoplasm. The catalysed reaction is 7-phospho-2-dehydro-3-deoxy-D-arabino-heptonate = 3-dehydroquinate + phosphate. It functions in the pathway metabolic intermediate biosynthesis; chorismate biosynthesis; chorismate from D-erythrose 4-phosphate and phosphoenolpyruvate: step 2/7. Functionally, catalyzes the conversion of 3-deoxy-D-arabino-heptulosonate 7-phosphate (DAHP) to dehydroquinate (DHQ). This is 3-dehydroquinate synthase from Bartonella tribocorum (strain CIP 105476 / IBS 506).